A 272-amino-acid polypeptide reads, in one-letter code: tRNA pseudouridine synthase A (272 aa).

The Nucleophile role is filled by aspartate 52. Tyrosine 110 is a binding site for substrate.

The protein belongs to the tRNA pseudouridine synthase TruA family. Homodimer.

It catalyses the reaction uridine(38/39/40) in tRNA = pseudouridine(38/39/40) in tRNA. Functionally, formation of pseudouridine at positions 38, 39 and 40 in the anticodon stem and loop of transfer RNAs. This Cupriavidus taiwanensis (strain DSM 17343 / BCRC 17206 / CCUG 44338 / CIP 107171 / LMG 19424 / R1) (Ralstonia taiwanensis (strain LMG 19424)) protein is tRNA pseudouridine synthase A.